A 370-amino-acid chain; its full sequence is Actin-related protein 2/3 complex subunit 1A-B (370 aa).

6 WD repeats span residues 6–45, 50–89, 140–179, 202–241, 244–284, and 322–365; these read FLLE…WVKC, EHNG…WKPT, PIRS…VDEK, SSGG…SVSQ, TEFL…TFVS, and LHQN…SYIQ.

The protein belongs to the WD repeat ARPC1 family. Component of the Arp2/3 complex.

It localises to the cytoplasm. It is found in the cytoskeleton. Its subcellular location is the nucleus. In terms of biological role, probably functions as a component of the Arp2/3 complex which is involved in regulation of actin polymerization and together with an activating nucleation-promoting factor (NPF) mediates the formation of branched actin networks. In addition to its role in the cytoplasmic cytoskeleton, the Arp2/3 complex also promotes actin polymerization in the nucleus, thereby regulating gene transcription and repair of damaged DNA. The polypeptide is Actin-related protein 2/3 complex subunit 1A-B (arpc1a-b) (Xenopus laevis (African clawed frog)).